A 234-amino-acid chain; its full sequence is Large ribosomal subunit protein uL1 (234 aa).

The protein belongs to the universal ribosomal protein uL1 family. As to quaternary structure, part of the 50S ribosomal subunit.

Its function is as follows. Binds directly to 23S rRNA. The L1 stalk is quite mobile in the ribosome, and is involved in E site tRNA release. Protein L1 is also a translational repressor protein, it controls the translation of the L11 operon by binding to its mRNA. The polypeptide is Large ribosomal subunit protein uL1 (Pectobacterium carotovorum subsp. carotovorum (strain PC1)).